Consider the following 231-residue polypeptide: 6-phosphogluconolactonase (231 aa).

It belongs to the glucosamine/galactosamine-6-phosphate isomerase family. 6-phosphogluconolactonase subfamily.

It carries out the reaction 6-phospho-D-glucono-1,5-lactone + H2O = 6-phospho-D-gluconate + H(+). It functions in the pathway carbohydrate degradation; pentose phosphate pathway; D-ribulose 5-phosphate from D-glucose 6-phosphate (oxidative stage): step 2/3. Functionally, hydrolysis of 6-phosphogluconolactone to 6-phosphogluconate. The chain is 6-phosphogluconolactonase (pgl) from Neisseria meningitidis serogroup A / serotype 4A (strain DSM 15465 / Z2491).